The chain runs to 518 residues: Xylose import ATP-binding protein XylG (518 aa).

ABC transporter domains lie at 6–245 (LQMN…VGRE) and 262–507 (FEAR…LSHP). 38–45 (GENGTGKS) contacts ATP.

Belongs to the ABC transporter superfamily. Xylose importer (TC 3.A.1.2.4) family. As to quaternary structure, the complex is composed of two ATP-binding proteins (XylG), two transmembrane proteins (XylH) and a solute-binding protein (XylF).

It is found in the cell inner membrane. The catalysed reaction is D-xylose(out) + ATP + H2O = D-xylose(in) + ADP + phosphate + H(+). Part of the ABC transporter complex XylFGH involved in xylose import. Responsible for energy coupling to the transport system. This is Xylose import ATP-binding protein XylG from Pseudomonas savastanoi pv. phaseolicola (strain 1448A / Race 6) (Pseudomonas syringae pv. phaseolicola (strain 1448A / Race 6)).